The primary structure comprises 306 residues: 4-hydroxy-3-methylbut-2-enyl diphosphate reductase (306 aa).

C12 lines the [4Fe-4S] cluster pocket. Residues H41 and H74 each coordinate (2E)-4-hydroxy-3-methylbut-2-enyl diphosphate. Positions 41 and 74 each coordinate dimethylallyl diphosphate. Residues H41 and H74 each contribute to the isopentenyl diphosphate site. C96 is a binding site for [4Fe-4S] cluster. H124 is a binding site for (2E)-4-hydroxy-3-methylbut-2-enyl diphosphate. Dimethylallyl diphosphate is bound at residue H124. H124 is a binding site for isopentenyl diphosphate. The active-site Proton donor is the E126. Residue T164 participates in (2E)-4-hydroxy-3-methylbut-2-enyl diphosphate binding. C194 contributes to the [4Fe-4S] cluster binding site. (2E)-4-hydroxy-3-methylbut-2-enyl diphosphate is bound by residues S222, S223, N224, and S266. 4 residues coordinate dimethylallyl diphosphate: S222, S223, N224, and S266. S222, S223, N224, and S266 together coordinate isopentenyl diphosphate.

This sequence belongs to the IspH family. [4Fe-4S] cluster is required as a cofactor.

It carries out the reaction isopentenyl diphosphate + 2 oxidized [2Fe-2S]-[ferredoxin] + H2O = (2E)-4-hydroxy-3-methylbut-2-enyl diphosphate + 2 reduced [2Fe-2S]-[ferredoxin] + 2 H(+). The catalysed reaction is dimethylallyl diphosphate + 2 oxidized [2Fe-2S]-[ferredoxin] + H2O = (2E)-4-hydroxy-3-methylbut-2-enyl diphosphate + 2 reduced [2Fe-2S]-[ferredoxin] + 2 H(+). It participates in isoprenoid biosynthesis; dimethylallyl diphosphate biosynthesis; dimethylallyl diphosphate from (2E)-4-hydroxy-3-methylbutenyl diphosphate: step 1/1. It functions in the pathway isoprenoid biosynthesis; isopentenyl diphosphate biosynthesis via DXP pathway; isopentenyl diphosphate from 1-deoxy-D-xylulose 5-phosphate: step 6/6. In terms of biological role, catalyzes the conversion of 1-hydroxy-2-methyl-2-(E)-butenyl 4-diphosphate (HMBPP) into a mixture of isopentenyl diphosphate (IPP) and dimethylallyl diphosphate (DMAPP). Acts in the terminal step of the DOXP/MEP pathway for isoprenoid precursor biosynthesis. The sequence is that of 4-hydroxy-3-methylbut-2-enyl diphosphate reductase from Dechloromonas aromatica (strain RCB).